The following is a 121-amino-acid chain: Large ribosomal subunit protein uL18 (121 aa).

This sequence belongs to the universal ribosomal protein uL18 family. In terms of assembly, part of the 50S ribosomal subunit; part of the 5S rRNA/L5/L18/L25 subcomplex. Contacts the 5S and 23S rRNAs.

In terms of biological role, this is one of the proteins that bind and probably mediate the attachment of the 5S RNA into the large ribosomal subunit, where it forms part of the central protuberance. In Bordetella avium (strain 197N), this protein is Large ribosomal subunit protein uL18.